Here is a 153-residue protein sequence, read N- to C-terminus: MRAIIQRVANASVTVAEQIVGQIETGLLVLLAVSPSDTSDDLQKLADKILNLRIFPDAHDRFDRSLIDCQGQLLVVSQFTLYADTRKGRRPSFTGAAAPALAEPMVDQFIAYCRGQGITTASGQFGAAMQVQLINDGPVTIILDTAEWQHGRG.

The Gly-cisPro motif, important for rejection of L-amino acids motif lies at 137-138; sequence GP.

Belongs to the DTD family. In terms of assembly, homodimer.

The protein resides in the cytoplasm. The enzyme catalyses glycyl-tRNA(Ala) + H2O = tRNA(Ala) + glycine + H(+). It catalyses the reaction a D-aminoacyl-tRNA + H2O = a tRNA + a D-alpha-amino acid + H(+). In terms of biological role, an aminoacyl-tRNA editing enzyme that deacylates mischarged D-aminoacyl-tRNAs. Also deacylates mischarged glycyl-tRNA(Ala), protecting cells against glycine mischarging by AlaRS. Acts via tRNA-based rather than protein-based catalysis; rejects L-amino acids rather than detecting D-amino acids in the active site. By recycling D-aminoacyl-tRNA to D-amino acids and free tRNA molecules, this enzyme counteracts the toxicity associated with the formation of D-aminoacyl-tRNA entities in vivo and helps enforce protein L-homochirality. This Herpetosiphon aurantiacus (strain ATCC 23779 / DSM 785 / 114-95) protein is D-aminoacyl-tRNA deacylase.